Here is a 54-residue protein sequence, read N- to C-terminus: Large ribosomal subunit protein bL33 (54 aa).

This sequence belongs to the bacterial ribosomal protein bL33 family.

This is Large ribosomal subunit protein bL33 from Chloroflexus aurantiacus (strain ATCC 29366 / DSM 635 / J-10-fl).